The primary structure comprises 441 residues: Mitochondrial distribution and morphology protein 12 (441 aa).

The SMP-LTD domain occupies 1–441 (MSIDIDWERA…VYPSFWTFLV (441 aa)). Residues 180 to 289 (TPLRAVTRGN…SGTPPRRMRE (110 aa)) form a disordered region. 2 stretches are compositionally biased toward polar residues: residues 226–245 (SRPSTANTGNTLFSRGSVST) and 253–263 (SSQTVLANNPG).

It belongs to the MDM12 family. Component of the ER-mitochondria encounter structure (ERMES) or MDM complex, composed of MMM1, MDM10, MDM12 and MDM34. An MMM1 homodimer associates with one molecule of MDM12 on each side in a pairwise head-to-tail manner, and the SMP-LTD domains of MMM1 and MDM12 generate a continuous hydrophobic tunnel for phospholipid trafficking.

The protein resides in the mitochondrion outer membrane. The protein localises to the endoplasmic reticulum membrane. Its function is as follows. Component of the ERMES/MDM complex, which serves as a molecular tether to connect the endoplasmic reticulum (ER) and mitochondria. Components of this complex are involved in the control of mitochondrial shape and protein biogenesis, and function in nonvesicular lipid trafficking between the ER and mitochondria. MDM12 is required for the interaction of the ER-resident membrane protein MMM1 and the outer mitochondrial membrane-resident beta-barrel protein MDM10. The MDM12-MMM1 subcomplex functions in the major beta-barrel assembly pathway that is responsible for biogenesis of all mitochondrial outer membrane beta-barrel proteins, and acts in a late step after the SAM complex. The MDM10-MDM12-MMM1 subcomplex further acts in the TOM40-specific pathway after the action of the MDM12-MMM1 complex. Essential for establishing and maintaining the structure of mitochondria and maintenance of mtDNA nucleoids. This Paracoccidioides brasiliensis (strain Pb18) protein is Mitochondrial distribution and morphology protein 12.